A 91-amino-acid polypeptide reads, in one-letter code: Putative regulatory protein CLB_2388 (91 aa).

It belongs to the RemA family.

The protein is Putative regulatory protein CLB_2388 of Clostridium botulinum (strain ATCC 19397 / Type A).